Reading from the N-terminus, the 159-residue chain is Phosphopantetheine adenylyltransferase (159 aa).

Thr10 provides a ligand contact to substrate. Residues Thr10 to Phe11 and His18 each bind ATP. Residues Lys42, Met74, and Arg88 each contribute to the substrate site. Residues Gly89–Arg91, Glu99, and Trp124–Ser130 each bind ATP.

The protein belongs to the bacterial CoaD family. In terms of assembly, homohexamer. It depends on Mg(2+) as a cofactor.

It is found in the cytoplasm. It carries out the reaction (R)-4'-phosphopantetheine + ATP + H(+) = 3'-dephospho-CoA + diphosphate. Its pathway is cofactor biosynthesis; coenzyme A biosynthesis; CoA from (R)-pantothenate: step 4/5. Reversibly transfers an adenylyl group from ATP to 4'-phosphopantetheine, yielding dephospho-CoA (dPCoA) and pyrophosphate. The chain is Phosphopantetheine adenylyltransferase from Escherichia fergusonii (strain ATCC 35469 / DSM 13698 / CCUG 18766 / IAM 14443 / JCM 21226 / LMG 7866 / NBRC 102419 / NCTC 12128 / CDC 0568-73).